Reading from the N-terminus, the 429-residue chain is Phosphoribosylamine--glycine ligase (429 aa).

Residues Lys-109–Glu-316 enclose the ATP-grasp domain. Position 135–196 (Leu-135–Ser-196) interacts with ATP. The disordered stretch occupies residues Ser-212–Pro-237. The segment covering Gln-213–Thr-223 has biased composition (basic and acidic residues). Residues Glu-286 and Asn-288 each coordinate Mg(2+).

This sequence belongs to the GARS family. Monomer. Mg(2+) serves as cofactor. Requires Mn(2+) as cofactor.

The enzyme catalyses 5-phospho-beta-D-ribosylamine + glycine + ATP = N(1)-(5-phospho-beta-D-ribosyl)glycinamide + ADP + phosphate + H(+). It functions in the pathway purine metabolism; IMP biosynthesis via de novo pathway; N(1)-(5-phospho-D-ribosyl)glycinamide from 5-phospho-alpha-D-ribose 1-diphosphate: step 2/2. The chain is Phosphoribosylamine--glycine ligase from Escherichia coli O157:H7.